We begin with the raw amino-acid sequence, 415 residues long: MAALCRGTVRACILKPLGLSVSLQVKRNVRALRRTPVRVLPAAEKGRERKEVEARRPQQPRQSEYQTRTSQGVRQASALTEAPALEFRYERALPGDKRLSKVVTIAKSKKFRDRHGQVLLEGRRLLTDALESGAVLQTLFFSRVDYLKLFPPDKLRKANLIKVNFDNIKIWSDVVAPQGLMGIFAKPDHEKISYPTTQTKHTLPLSLICDNIRDPGNLGTILRCAAGAGCNKVLLTKGCVDAWEPKVLRAGMGAHFRLPVISSLDWDIVPNYLSAGTKVFLADNFRPDMKHKTGDVSEKASDYGWVSTNPRRILITEEGYESSSDEEDNADKLYIPGLEVQSYFESWAQSPCAIVIGGETHGLSIESLLLAEKSNGKRLYIPVVPDIDSLNSAMAASILLFEGKRQIENTMKRKS.

The transit peptide at 1–47 directs the protein to the mitochondrion; that stretch reads MAALCRGTVRACILKPLGLSVSLQVKRNVRALRRTPVRVLPAAEKGR. Residues 41-73 form a disordered region; it reads PAAEKGRERKEVEARRPQQPRQSEYQTRTSQGV. The span at 44 to 56 shows a compositional bias: basic and acidic residues; it reads EKGRERKEVEARR. Over residues 59 to 73 the composition is skewed to polar residues; the sequence is QPRQSEYQTRTSQGV. Positions 357, 381, and 390 each coordinate S-adenosyl-L-methionine.

This sequence belongs to the class IV-like SAM-binding methyltransferase superfamily. RNA methyltransferase TrmH family.

The protein localises to the mitochondrion. The enzyme catalyses a uridine in rRNA + S-adenosyl-L-methionine = a 2'-O-methyluridine in rRNA + S-adenosyl-L-homocysteine + H(+). Its function is as follows. S-adenosyl-L-methionine-dependent 2'-O-ribose methyltransferase that catalyzes the formation of 2'-O-methylguanosine at position 1370 (Gm1370) in the mitochondrial large subunit ribosomal RNA (mtLSU rRNA), a conserved modification in the peptidyl transferase domain of the mtLSU rRNA. Also required for formation of 2'-O-methyluridine at position 1369 (Um1369) mediated by MRM2. The protein is rRNA methyltransferase 3, mitochondrial of Xenopus tropicalis (Western clawed frog).